Here is a 668-residue protein sequence, read N- to C-terminus: Probable 6-phosphofructo-2-kinase PB17E12.14c (668 aa).

Residues 1–14 show a composition bias toward basic and acidic residues; sequence MSNNNNKDDSELQS. Disordered regions lie at residues 1–105 and 136–185; these read MSNN…GSRP and HRVP…EATN. Polar residues-rich tracts occupy residues 46 to 56, 65 to 86, and 164 to 184; these read NDHSFTNTDSV, SPVS…QNSP, and SSMS…SEAT. Residue 197-204 participates in ATP binding; the sequence is GLPARGKS. Residues D281 and C312 contribute to the active site. Beta-D-fructose 6-phosphate is bound at residue R346. The active site involves E540. The Proton donor role is filled by H608.

The enzyme catalyses beta-D-fructose 6-phosphate + ATP = beta-D-fructose 2,6-bisphosphate + ADP + H(+). Synthesis of fructose 2,6-bisphosphate. This chain is Probable 6-phosphofructo-2-kinase PB17E12.14c, found in Schizosaccharomyces pombe (strain 972 / ATCC 24843) (Fission yeast).